The chain runs to 411 residues: Translation initiation factor 2 subunit gamma (411 aa).

One can recognise a tr-type G domain in the interval 9-201 (QPTVNIGMVG…AIEKYIPTPE (193 aa)). The interval 18-25 (GHVDHGKS) is G1. Mg(2+)-binding residues include Asp-21, Ser-25, Gly-46, and Ser-48. 21-26 (DHGKST) contributes to the GTP binding site. Positions 46–50 (GISIK) are G2. A G3 region spans residues 88–91 (DAPG). GTP is bound by residues 144-147 (NKID) and 179-181 (SAY). The segment at 144–147 (NKID) is G4. Residues 179 to 181 (SAY) are G5.

This sequence belongs to the TRAFAC class translation factor GTPase superfamily. Classic translation factor GTPase family. EIF2G subfamily. Heterotrimer composed of an alpha, a beta and a gamma chain. Requires Mg(2+) as cofactor.

The catalysed reaction is GTP + H2O = GDP + phosphate + H(+). In terms of biological role, eIF-2 functions in the early steps of protein synthesis by forming a ternary complex with GTP and initiator tRNA. The sequence is that of Translation initiation factor 2 subunit gamma from Thermoplasma volcanium (strain ATCC 51530 / DSM 4299 / JCM 9571 / NBRC 15438 / GSS1).